Here is a 446-residue protein sequence, read N- to C-terminus: Inhibitor of Apoptosis OPG037 (446 aa).

ANK repeat units follow at residues 71–100 (DGNY…DPNA), 104–135 (QHKT…KINN), 207–237 (DGNT…DVNK), 241–271 (FGDS…VITD), 296–325 (YDST…ICED), and 327–351 (MYYA…SVDS).

This sequence belongs to the orthopoxvirus OPG037 protein family. In terms of assembly, may interact with host caspase-9-Apaf-1 complex.

Its subcellular location is the host cytoplasm. In terms of biological role, inhibits host apoptosis. Acts by associating with host apoptosome. In Variola virus (isolate Human/India/Ind3/1967) (VARV), this protein is Inhibitor of Apoptosis OPG037 (OPG037).